The following is a 261-amino-acid chain: Ribosomal RNA small subunit methyltransferase J (261 aa).

S-adenosyl-L-methionine contacts are provided by residues 111-112 (RD), 127-128 (ER), 163-164 (SS), and aspartate 181.

The protein belongs to the methyltransferase superfamily. RsmJ family.

It is found in the cytoplasm. It carries out the reaction guanosine(1516) in 16S rRNA + S-adenosyl-L-methionine = N(2)-methylguanosine(1516) in 16S rRNA + S-adenosyl-L-homocysteine + H(+). Functionally, specifically methylates the guanosine in position 1516 of 16S rRNA. This chain is Ribosomal RNA small subunit methyltransferase J, found in Shewanella sp. (strain ANA-3).